Here is a 357-residue protein sequence, read N- to C-terminus: Dihydroorotate dehydrogenase (quinone) (357 aa).

FMN contacts are provided by residues 66–70 and Thr-90; that span reads AGFDK. Position 70 (Lys-70) interacts with substrate. Substrate is bound at residue 115–119; that stretch reads NRMGF. Asn-143 and Asn-176 together coordinate FMN. Substrate is bound at residue Asn-176. Ser-179 (nucleophile) is an active-site residue. Substrate is bound at residue Asn-181. FMN is bound by residues Lys-212 and Thr-240. 241 to 242 is a substrate binding site; that stretch reads NT. Residues Gly-264, Gly-293, and 314 to 315 each bind FMN; that span reads YT.

This sequence belongs to the dihydroorotate dehydrogenase family. Type 2 subfamily. Monomer. Requires FMN as cofactor.

It localises to the cell membrane. It carries out the reaction (S)-dihydroorotate + a quinone = orotate + a quinol. It participates in pyrimidine metabolism; UMP biosynthesis via de novo pathway; orotate from (S)-dihydroorotate (quinone route): step 1/1. Functionally, catalyzes the conversion of dihydroorotate to orotate with quinone as electron acceptor. The polypeptide is Dihydroorotate dehydrogenase (quinone) (Mycobacterium bovis (strain BCG / Pasteur 1173P2)).